A 168-amino-acid chain; its full sequence is Photosystem I assembly protein Ycf3 (168 aa).

TPR repeat units follow at residues 35-68 (AFTYYRDGMSAQSEGNYAEALQNYYEATRPEIDP), 72-105 (SYILYNIGLIHTSNGEHTKALEYYFRALERNPFL), and 120-153 (GEQAILQGDSEIAEAWSDQAAEYWKQAIALTPGN).

Belongs to the Ycf3 family.

It localises to the plastid. The protein localises to the chloroplast thylakoid membrane. In terms of biological role, essential for the assembly of the photosystem I (PSI) complex. May act as a chaperone-like factor to guide the assembly of the PSI subunits. This chain is Photosystem I assembly protein Ycf3, found in Lemna minor (Common duckweed).